A 491-amino-acid chain; its full sequence is Chromosomal replication initiator protein DnaA (491 aa).

The tract at residues 1–69 (MTTWDKCLKK…TIQECHGNDL (69 aa)) is domain I, interacts with DnaA modulators. Residues 69 to 154 (LIIEYSNKKF…KEDEEYSFGL (86 aa)) form a domain II region. Residues 155 to 371 (PLKEKYVFDS…GALNRVLTTS (217 aa)) are domain III, AAA+ region. The ATP site is built by G199, G201, K202, and T203. The interval 372-491 (KFNHKDPTIE…YELLLDKISR (120 aa)) is domain IV, binds dsDNA.

This sequence belongs to the DnaA family. Oligomerizes as a right-handed, spiral filament on DNA at oriC.

The protein resides in the cytoplasm. Plays an essential role in the initiation and regulation of chromosomal replication. ATP-DnaA binds to the origin of replication (oriC) to initiate formation of the DNA replication initiation complex once per cell cycle. Binds the DnaA box (a 9 base pair repeat at the origin) and separates the double-stranded (ds)DNA. Forms a right-handed helical filament on oriC DNA; dsDNA binds to the exterior of the filament while single-stranded (ss)DNA is stabiized in the filament's interior. The ATP-DnaA-oriC complex binds and stabilizes one strand of the AT-rich DNA unwinding element (DUE), permitting loading of DNA polymerase. After initiation quickly degrades to an ADP-DnaA complex that is not apt for DNA replication. Binds acidic phospholipids. In Francisella tularensis subsp. holarctica (strain LVS), this protein is Chromosomal replication initiator protein DnaA.